Reading from the N-terminus, the 191-residue chain is GTP-binding protein CIN4 (191 aa).

GTP is bound by residues 23 to 30 (GLDNSGKS), 69 to 73 (DIGGQ), and 131 to 134 (NKID).

Implicated in yeast microtubule function. This chain is GTP-binding protein CIN4 (CIN4), found in Saccharomyces cerevisiae (strain ATCC 204508 / S288c) (Baker's yeast).